Here is a 561-residue protein sequence, read N- to C-terminus: Oxygen-dependent choline dehydrogenase (561 aa).

FAD is bound at residue 7–36; that stretch reads DYIIVGAGSAGNVLASRLAEDADVTVLLLE. His-474 functions as the Proton acceptor in the catalytic mechanism.

Belongs to the GMC oxidoreductase family. FAD serves as cofactor.

It catalyses the reaction choline + A = betaine aldehyde + AH2. The enzyme catalyses betaine aldehyde + NAD(+) + H2O = glycine betaine + NADH + 2 H(+). It participates in amine and polyamine biosynthesis; betaine biosynthesis via choline pathway; betaine aldehyde from choline (cytochrome c reductase route): step 1/1. Functionally, involved in the biosynthesis of the osmoprotectant glycine betaine. Catalyzes the oxidation of choline to betaine aldehyde and betaine aldehyde to glycine betaine at the same rate. The protein is Oxygen-dependent choline dehydrogenase of Paraburkholderia xenovorans (strain LB400).